The primary structure comprises 348 residues: tRNA pseudouridine synthase D (348 aa).

Residue phenylalanine 26 coordinates substrate. Aspartate 79 serves as the catalytic Nucleophile. Asparagine 128 lines the substrate pocket. Residues 154–302 (GVPNYFGSQR…VDPARRALLL (149 aa)) form the TRUD domain. Phenylalanine 328 lines the substrate pocket.

The protein belongs to the pseudouridine synthase TruD family.

The catalysed reaction is uridine(13) in tRNA = pseudouridine(13) in tRNA. Functionally, responsible for synthesis of pseudouridine from uracil-13 in transfer RNAs. The protein is tRNA pseudouridine synthase D of Serratia proteamaculans (strain 568).